The sequence spans 92 residues: MARTVNCVYLNKEADGLDFQLYPGDLGKRIFDNVSKEAWGLWQKKQTMLINEKKLNMMNVDDRKFLEEQMTSFLFEGKDVEIEGFVPEKGQE.

This sequence belongs to the Fe(2+)-trafficking protein family.

In terms of biological role, could be a mediator in iron transactions between iron acquisition and iron-requiring processes, such as synthesis and/or repair of Fe-S clusters in biosynthetic enzymes. The chain is Probable Fe(2+)-trafficking protein from Shewanella sp. (strain ANA-3).